We begin with the raw amino-acid sequence, 114 residues long: Kita-kyushu lung cancer antigen 1 homolog (114 aa).

Residues 1-4 (MNVY) lie on the Cytoplasmic side of the membrane. A helical; Signal-anchor for type II membrane protein transmembrane segment spans residues 5-22 (LLLASGILCALMTVFWKY). At 23 to 114 (RRFQRNTGEM…RSASAHRKST (92 aa)) the chain is on the extracellular side. Asn84 carries N-linked (GlcNAc...) asparagine glycosylation.

Its subcellular location is the cell membrane. The chain is Kita-kyushu lung cancer antigen 1 homolog (CT83) from Macaca fascicularis (Crab-eating macaque).